We begin with the raw amino-acid sequence, 123 residues long: Histone H2B (123 aa).

Positions 1 to 30 (MPPKTSGKAAKKAGKAQKNITKTDKKKKRK) are disordered. An N-methylproline; partial modification is found at P2. At K44 the chain carries N6-succinyllysine. O-linked (GlcNAc) serine glycosylation is present at S110. N6-succinyllysine is present on residues K114 and K118. K118 is covalently cross-linked (Glycyl lysine isopeptide (Lys-Gly) (interchain with G-Cter in ubiquitin)).

Belongs to the histone H2B family. As to quaternary structure, the nucleosome is a histone octamer containing two molecules each of H2A, H2B, H3 and H4 assembled in one H3-H4 heterotetramer and two H2A-H2B heterodimers. The octamer wraps approximately 147 bp of DNA. In terms of processing, phosphorylated by the catalytic component of the Dbf4-dependent kinase (DDK) complex Cdc7. Monoubiquitination of Lys-118 by Bre1 gives a specific tag for epigenetic transcriptional activation and is also prerequisite for histone H3 'Lys-4' and 'Lys-79' methylation. Deubiquitination of Lys-118 by the SAGA complex is involved in activating transcription of a large subset of genes. Post-translationally, methylation at Pro-2 increases upon heat shock. In terms of processing, glcNAcylation at Ser-110 promotes monoubiquitination of Lys-118. It fluctuates in response to extracellular glucose, and associates with transcribed genes.

The protein resides in the nucleus. The protein localises to the chromosome. In terms of biological role, core component of nucleosome. Nucleosomes wrap and compact DNA into chromatin, limiting DNA accessibility to the cellular machineries which require DNA as a template. Histones thereby play a central role in transcription regulation, DNA repair, DNA replication and chromosomal stability. DNA accessibility is regulated via a complex set of post-translational modifications of histones, also called histone code, and nucleosome remodeling. This is Histone H2B (His2B) from Drosophila erecta (Fruit fly).